The chain runs to 187 residues: UPF0200 protein APE_1753.1 (187 aa).

13 to 20 (GLPGSGKS) contacts ATP.

The protein belongs to the UPF0200 family.

This Aeropyrum pernix (strain ATCC 700893 / DSM 11879 / JCM 9820 / NBRC 100138 / K1) protein is UPF0200 protein APE_1753.1.